A 479-amino-acid polypeptide reads, in one-letter code: Aspartyl/glutamyl-tRNA(Asn/Gln) amidotransferase subunit B (479 aa).

This sequence belongs to the GatB/GatE family. GatB subfamily. In terms of assembly, heterotrimer of A, B and C subunits.

It catalyses the reaction L-glutamyl-tRNA(Gln) + L-glutamine + ATP + H2O = L-glutaminyl-tRNA(Gln) + L-glutamate + ADP + phosphate + H(+). It carries out the reaction L-aspartyl-tRNA(Asn) + L-glutamine + ATP + H2O = L-asparaginyl-tRNA(Asn) + L-glutamate + ADP + phosphate + 2 H(+). Its function is as follows. Allows the formation of correctly charged Asn-tRNA(Asn) or Gln-tRNA(Gln) through the transamidation of misacylated Asp-tRNA(Asn) or Glu-tRNA(Gln) in organisms which lack either or both of asparaginyl-tRNA or glutaminyl-tRNA synthetases. The reaction takes place in the presence of glutamine and ATP through an activated phospho-Asp-tRNA(Asn) or phospho-Glu-tRNA(Gln). This Streptococcus pyogenes serotype M12 (strain MGAS2096) protein is Aspartyl/glutamyl-tRNA(Asn/Gln) amidotransferase subunit B.